A 304-amino-acid polypeptide reads, in one-letter code: Lipoprotein signal peptidase (304 aa).

Helical transmembrane passes span 28–48 (IKIK…IVFV), 86–106 (PAVP…TFIF), and 112–132 (LIVL…DRSV). Catalysis depends on residues Asp148 and Asp163. The chain crosses the membrane as a helical span at residues 163-183 (DICIVTGFALIFLTFVVDIFL).

The protein belongs to the peptidase A8 family.

The protein localises to the cell membrane. The enzyme catalyses Release of signal peptides from bacterial membrane prolipoproteins. Hydrolyzes -Xaa-Yaa-Zaa-|-(S,diacylglyceryl)Cys-, in which Xaa is hydrophobic (preferably Leu), and Yaa (Ala or Ser) and Zaa (Gly or Ala) have small, neutral side chains.. Its pathway is protein modification; lipoprotein biosynthesis (signal peptide cleavage). In terms of biological role, this protein specifically catalyzes the removal of signal peptides from prolipoproteins. The chain is Lipoprotein signal peptidase from Mycoplasmoides gallisepticum (strain R(low / passage 15 / clone 2)) (Mycoplasma gallisepticum).